The sequence spans 540 residues: Chaperonin GroEL (540 aa).

ATP contacts are provided by residues 29–32 (TLGP), 86–90 (DGTTT), Gly-413, 476–478 (NAA), and Asp-492.

It belongs to the chaperonin (HSP60) family. In terms of assembly, forms a cylinder of 14 subunits composed of two heptameric rings stacked back-to-back. Interacts with the co-chaperonin GroES.

Its subcellular location is the cytoplasm. The catalysed reaction is ATP + H2O + a folded polypeptide = ADP + phosphate + an unfolded polypeptide.. In terms of biological role, together with its co-chaperonin GroES, plays an essential role in assisting protein folding. The GroEL-GroES system forms a nano-cage that allows encapsulation of the non-native substrate proteins and provides a physical environment optimized to promote and accelerate protein folding. The sequence is that of Chaperonin GroEL from Streptococcus pneumoniae (strain P1031).